The sequence spans 149 residues: UPF0178 protein VFMJ11_0615 (149 aa).

This sequence belongs to the UPF0178 family.

The sequence is that of UPF0178 protein VFMJ11_0615 from Aliivibrio fischeri (strain MJ11) (Vibrio fischeri).